The chain runs to 254 residues: MGRVIRNQRKGAGSIFTSHTRLRKGAAKLRTLDYAERHGYIRGVVKQIIHDPGRGAPLAKVAFRDPYKYKLREETFIANEGVYTGQFIYAGKKASLNVGNILPLGACPEGTIVSNVEEKVGDRGALGRTSGNYVIIIGHNPDENKTRVKLPSGAKKIISSDARGVIGVVAGGGRIDKPLLKAGRAFHKYKVKRNSWPKTRGVAMNPVDHPHGGGNHQHIGKASTISRGAVSGQKAGLIAARRTGLLRGTQKTAE.

This sequence belongs to the universal ribosomal protein uL2 family. In terms of assembly, component of the large ribosomal subunit. Mature ribosomes consist of a small (40S) and a large (60S) subunit. The 40S subunit contains about 32 different proteins and 1 molecule of RNA (18S). The 60S subunit contains 45 different proteins and 3 molecules of RNA (25S, 5.8S and 5S).

It localises to the cytoplasm. Component of the ribosome, a large ribonucleoprotein complex responsible for the synthesis of proteins in the cell. The small ribosomal subunit (SSU) binds messenger RNAs (mRNAs) and translates the encoded message by selecting cognate aminoacyl-transfer RNA (tRNA) molecules. The large subunit (LSU) contains the ribosomal catalytic site termed the peptidyl transferase center (PTC), which catalyzes the formation of peptide bonds, thereby polymerizing the amino acids delivered by tRNAs into a polypeptide chain. The nascent polypeptides leave the ribosome through a tunnel in the LSU and interact with protein factors that function in enzymatic processing, targeting, and the membrane insertion of nascent chains at the exit of the ribosomal tunnel. This Candida albicans (strain SC5314 / ATCC MYA-2876) (Yeast) protein is Large ribosomal subunit protein uL2.